A 241-amino-acid polypeptide reads, in one-letter code: Phosphoribosylaminoimidazole-succinocarboxamide synthase (241 aa).

The protein belongs to the SAICAR synthetase family.

It carries out the reaction 5-amino-1-(5-phospho-D-ribosyl)imidazole-4-carboxylate + L-aspartate + ATP = (2S)-2-[5-amino-1-(5-phospho-beta-D-ribosyl)imidazole-4-carboxamido]succinate + ADP + phosphate + 2 H(+). Its pathway is purine metabolism; IMP biosynthesis via de novo pathway; 5-amino-1-(5-phospho-D-ribosyl)imidazole-4-carboxamide from 5-amino-1-(5-phospho-D-ribosyl)imidazole-4-carboxylate: step 1/2. In Caldivirga maquilingensis (strain ATCC 700844 / DSM 13496 / JCM 10307 / IC-167), this protein is Phosphoribosylaminoimidazole-succinocarboxamide synthase.